Here is a 422-residue protein sequence, read N- to C-terminus: Blood group Rh(D) polypeptide (422 aa).

Transmembrane regions (helical) follow at residues 13 to 33 (LPLW…FLIG), 43 to 63 (FMAI…GFGF), 76 to 96 (VAFS…LDYF), 113 to 135 (FLSI…AVLG), 137 to 159 (VNLV…IRVA), 170 to 190 (IIMM…AWWL), 215 to 235 (LFAM…NSAL), 244 to 266 (AVFN…SALS), 272 to 292 (INMV…GAPS), 294 to 314 (LISS…ISIW), 335 to 355 (YTFG…HIIA), and 372 to 392 (VGAL…TGCL).

This sequence belongs to the ammonium transporter (TC 2.A.49) family. Rh subfamily. Palmitoylated.

Its subcellular location is the cell membrane. In terms of biological role, may be part of an oligomeric complex which is likely to have a transport or channel function in the erythrocyte membrane. The polypeptide is Blood group Rh(D) polypeptide (Rhd) (Rattus norvegicus (Rat)).